Consider the following 193-residue polypeptide: RNA pyrophosphohydrolase (193 aa).

A Nudix hydrolase domain is found at 6–149 (GFRPNVGIIL…KRDVYQRALQ (144 aa)). The Nudix box signature appears at 38–59 (GGIKFGETPEQAMFRELEEEVG). A disordered region spans residues 174-193 (THSARKTDEPSTEQTKPNNE).

This sequence belongs to the Nudix hydrolase family. RppH subfamily. A divalent metal cation serves as cofactor.

Its function is as follows. Accelerates the degradation of transcripts by removing pyrophosphate from the 5'-end of triphosphorylated RNA, leading to a more labile monophosphorylated state that can stimulate subsequent ribonuclease cleavage. The protein is RNA pyrophosphohydrolase of Herminiimonas arsenicoxydans.